Reading from the N-terminus, the 141-residue chain is VLSPADKANVKAAWDKVGGQAGDYGAEALERMFLSFPTTKTYFPHFDLSHGSAQVKAHGKKVGDALSNAAGHLDDLPGALSALSDLHAYKLRVDPVNFKLLSHCLLVTLASHHAAEFTPAVHASLDKFLASVGTVLTSKYR.

In terms of domain architecture, Globin spans 1–141 (VLSPADKANV…VGTVLTSKYR (141 aa)). Residue serine 3 is modified to Phosphoserine. N6-succinyllysine is present on residues lysine 7 and lysine 11. Lysine 16 carries the N6-acetyllysine; alternate modification. N6-succinyllysine; alternate is present on lysine 16. Tyrosine 24 bears the Phosphotyrosine mark. Serine 35 is subject to Phosphoserine. Lysine 40 is modified (N6-succinyllysine). The residue at position 49 (serine 49) is a Phosphoserine. Residue histidine 58 participates in O2 binding. Histidine 87 is a heme b binding site. Residue serine 102 is modified to Phosphoserine. A Phosphothreonine modification is found at threonine 108. Serine 124 and serine 131 each carry phosphoserine. Residues threonine 134 and threonine 137 each carry the phosphothreonine modification. Phosphoserine is present on serine 138.

This sequence belongs to the globin family. As to quaternary structure, heterotetramer of two alpha chains and two beta chains. As to expression, red blood cells.

Its function is as follows. Involved in oxygen transport from the lung to the various peripheral tissues. This Macroderma gigas (Australian ghost bat) protein is Hemoglobin subunit alpha-1/2.